The chain runs to 410 residues: 3-phosphoshikimate 1-carboxyvinyltransferase (410 aa).

3-phosphoshikimate-binding residues include lysine 20, serine 21, and arginine 25. Residue lysine 20 participates in phosphoenolpyruvate binding. Arginine 115 contacts phosphoenolpyruvate. 6 residues coordinate 3-phosphoshikimate: serine 157, serine 158, glutamine 159, serine 183, aspartate 293, and lysine 320. Glutamine 159 contacts phosphoenolpyruvate. Catalysis depends on aspartate 293, which acts as the Proton acceptor. Arginine 324, arginine 365, and lysine 391 together coordinate phosphoenolpyruvate.

Belongs to the EPSP synthase family. In terms of assembly, monomer.

It localises to the cytoplasm. The enzyme catalyses 3-phosphoshikimate + phosphoenolpyruvate = 5-O-(1-carboxyvinyl)-3-phosphoshikimate + phosphate. Its pathway is metabolic intermediate biosynthesis; chorismate biosynthesis. In terms of biological role, catalyzes the transfer of the enolpyruvyl moiety of phosphoenolpyruvate (PEP) to the 5-hydroxyl of shikimate-3-phosphate (S3P) to produce enolpyruvyl shikimate-3-phosphate and inorganic phosphate. This chain is 3-phosphoshikimate 1-carboxyvinyltransferase, found in Thermoplasma acidophilum (strain ATCC 25905 / DSM 1728 / JCM 9062 / NBRC 15155 / AMRC-C165).